Consider the following 155-residue polypeptide: 6,7-dimethyl-8-ribityllumazine synthase (155 aa).

5-amino-6-(D-ribitylamino)uracil-binding positions include Phe-22, Ala-57–Glu-59, and Ser-81–Ile-83. Gly-86–Thr-87 lines the (2S)-2-hydroxy-3-oxobutyl phosphate pocket. His-88 (proton donor) is an active-site residue. Position 113 (Phe-113) interacts with 5-amino-6-(D-ribitylamino)uracil. Arg-127 is a (2S)-2-hydroxy-3-oxobutyl phosphate binding site.

The protein belongs to the DMRL synthase family. As to quaternary structure, forms an icosahedral capsid composed of 60 subunits, arranged as a dodecamer of pentamers.

It carries out the reaction (2S)-2-hydroxy-3-oxobutyl phosphate + 5-amino-6-(D-ribitylamino)uracil = 6,7-dimethyl-8-(1-D-ribityl)lumazine + phosphate + 2 H2O + H(+). It functions in the pathway cofactor biosynthesis; riboflavin biosynthesis; riboflavin from 2-hydroxy-3-oxobutyl phosphate and 5-amino-6-(D-ribitylamino)uracil: step 1/2. Functionally, catalyzes the formation of 6,7-dimethyl-8-ribityllumazine by condensation of 5-amino-6-(D-ribitylamino)uracil with 3,4-dihydroxy-2-butanone 4-phosphate. This is the penultimate step in the biosynthesis of riboflavin. The chain is 6,7-dimethyl-8-ribityllumazine synthase from Photobacterium phosphoreum.